We begin with the raw amino-acid sequence, 31 residues long: Photosystem I reaction center subunit XII (31 aa).

Residues 6–25 traverse the membrane as a helical segment; the sequence is TQILAALVVALLPAFLAFRL.

It belongs to the PsaM family.

Its subcellular location is the cellular thylakoid membrane. This chain is Photosystem I reaction center subunit XII, found in Synechocystis sp. (strain ATCC 27184 / PCC 6803 / Kazusa).